The chain runs to 159 residues: Small ribosomal subunit protein uS7 (159 aa).

The protein belongs to the universal ribosomal protein uS7 family. Part of the 30S ribosomal subunit. Contacts proteins S9 and S11.

In terms of biological role, one of the primary rRNA binding proteins, it binds directly to 16S rRNA where it nucleates assembly of the head domain of the 30S subunit. Is located at the subunit interface close to the decoding center, probably blocks exit of the E-site tRNA. In Wolbachia pipientis wMel, this protein is Small ribosomal subunit protein uS7.